Reading from the N-terminus, the 64-residue chain is Alpha-mammal toxin Lqq5 (64 aa).

The LCN-type CS-alpha/beta domain occupies 2–64 (KDGYIVDDKN…VSIKEKGRCN (63 aa)). 4 disulfides stabilise this stretch: C12-C63, C16-C36, C22-C46, and C26-C48. The residue at position 64 (N64) is an Asparagine amide.

Belongs to the long (4 C-C) scorpion toxin superfamily. Sodium channel inhibitor family. Alpha subfamily. Expressed by the venom gland.

Its subcellular location is the secreted. Functionally, alpha toxins bind voltage-independently at site-3 of sodium channels (Nav) and inhibit the inactivation of the activated channels, thereby blocking neuronal transmission. Is active on mammals and bind with high affinity to rat brain synaptosome. Does not display phospholipid-binding activity. This chain is Alpha-mammal toxin Lqq5, found in Leiurus quinquestriatus quinquestriatus (Egyptian scorpion).